Reading from the N-terminus, the 220-residue chain is Tumor protein p53-inducible nuclear protein 2 (220 aa).

Positions 1–12 (MFQRLSSLFFST) are enriched in low complexity. 3 disordered regions span residues 1–24 (MFQR…CPRA), 41–69 (PDSY…LMDE), and 119–220 (PGSP…QFNY). Serine 14 carries the post-translational modification Phosphoserine. An LIR motif is present at residues 26–41 (VSEEDEVDGWLIIDLP). Residues 47 to 64 (PPSPGAAPAPAGRPPPAP) are compositionally biased toward pro residues. At serine 136 the chain carries Phosphoserine. A compositionally biased stretch (low complexity) spans 152–170 (HAAPLPARAALLEKAGQVR). A compositionally biased stretch (polar residues) spans 205 to 220 (NQSSFIYQPCQRQFNY).

Interacts with VMP1, GABARAP, GABARAPL1, GABARAPL2, MAP1LC3A, MAP1LC3B, MAP1LC3C and THRA.

The protein localises to the cytoplasm. Its subcellular location is the cytosol. It is found in the nucleus. The protein resides in the PML body. It localises to the cytoplasmic vesicle. The protein localises to the autophagosome. Functionally, dual regulator of transcription and autophagy. Positively regulates autophagy and is required for autophagosome formation and processing. May act as a scaffold protein that recruits MAP1LC3A, GABARAP and GABARAPL2 and brings them to the autophagosome membrane by interacting with VMP1 where, in cooperation with the BECN1-PI3-kinase class III complex, they trigger autophagosome development. Acts as a transcriptional activator of THRA. In Homo sapiens (Human), this protein is Tumor protein p53-inducible nuclear protein 2 (TP53INP2).